Consider the following 1050-residue polypeptide: Diacylglycerol kinase iota (1050 aa).

Disordered regions lie at residues N52–G73 and P325–G356. A compositionally biased stretch (basic residues) spans S332 to K347. Positions P367–N502 constitute a DAGKc domain. 2 ANK repeats span residues G943–L972 and T979–Q1008. The short motif at T1048–V1050 is the PDZ-binding element.

It belongs to the eukaryotic diacylglycerol kinase family. In terms of assembly, interacts (via PDZ-binding motif) with DLG4; controls the localization of DGKI to the synapse. Interacts (via PDZ-binding motif) with DLG1. Interacts (via PDZ-binding motif) with DLG2. Interacts (via PDZ-binding motif) with DLG3. May interact with RASGRP3; involved in the regulation of RASGRP3 activity. In terms of tissue distribution, specifically expressed in brain (at protein level). Expressed in hippocampus, cerebellum, brain stem and spinal cord (at protein level). Highly expressed in hippocampus, cerebellar cortex, olfactory bulb, and olfactory tubercle and to lower extent in the cerebral cortex, caudate putamen, and thalamus. Not detected in the white matter. Also expressed in eye. Major isoform in brain (at protein level). As to expression, minor isoform in brain (at protein level). In terms of tissue distribution, expressed in brain (at protein level).

It localises to the cell projection. The protein resides in the axon. It is found in the dendrite. Its subcellular location is the presynapse. The protein localises to the postsynapse. It localises to the postsynaptic density. The protein resides in the synaptic cell membrane. It is found in the cytoplasmic vesicle. Its subcellular location is the secretory vesicle. The protein localises to the synaptic vesicle membrane. It localises to the cytoplasm. The protein resides in the cytosol. It is found in the nucleus. It carries out the reaction a 1,2-diacyl-sn-glycerol + ATP = a 1,2-diacyl-sn-glycero-3-phosphate + ADP + H(+). It catalyses the reaction 1,2-di-(9Z-octadecenoyl)-sn-glycerol + ATP = 1,2-di-(9Z-octadecenoyl)-sn-glycero-3-phosphate + ADP + H(+). The enzyme catalyses 1-octadecanoyl-2-(9Z,12Z)-octadecadienoyl-sn-glycerol + ATP = 1-octadecanoyl-2-(9Z,12Z-octadecadienoyl)-sn-glycero-3-phosphate + ADP + H(+). The catalysed reaction is 1-octadecanoyl-2-(5Z,8Z,11Z,14Z-eicosatetraenoyl)-sn-glycerol + ATP = 1-octadecanoyl-2-(5Z,8Z,11Z,14Z-eicosatetraenoyl)-sn-glycero-3-phosphate + ADP + H(+). The protein operates within lipid metabolism; glycerolipid metabolism. With respect to regulation, activated by phosphatidylserine. Functionally, diacylglycerol kinase that converts diacylglycerol/DAG into phosphatidic acid/phosphatidate/PA and regulates the respective levels of these two bioactive lipids. Thereby, acts as a central switch between the signaling pathways activated by these second messengers with different cellular targets and opposite effects in numerous biological processes. Has probably no preference for any of the diacylglycerols in terms of the acyl chain composition, especially for the acyl chain at the sn-2 position. By controlling the diacylglycerol/DAG-mediated activation of RASGRP3, negatively regulates the Rap1 signaling pathway. May play a role in presynaptic diacylglycerol/DAG signaling and control neurotransmitter release during metabotropic glutamate receptor-dependent long-term depression. In terms of biological role, has a decreased affinity for ATP and a reduced diacylglycerol kinase activity. Has no preference for any of the diacylglycerols in terms of the acyl chain composition. Has no diacylglycerol kinase activity. In Rattus norvegicus (Rat), this protein is Diacylglycerol kinase iota.